The following is a 452-amino-acid chain: MPSVLENILKDKLLEVSDLKKNHALPININPSDRDFKKALLEKKTSFILECKKASPSKGLIRKDFDLLKITKTYEKFASCISVLADSKYFLGSYENIKIVSQHSTKPILCKDFIIDAFQIKLARMMGANAVLLMLSVLDDKNYLELFNLAKSLNMSVLTEVSNQQEIEHLLKLQYDIIGINNRDLHTLKTDINHTLKLRPLLPKDALIISESGIYSHAQIKALAPYVNGFLVGSSLMKEKDLKKACIKLILGENKVCGLTRIKDAKAVYKNHFIYGGLIFEKSSPRYIKPKEALKITKAVKKLDFVGVFVKDSIKKIQKIVKKLDLKAVQLYGYSQKEIAQLKKALPKTCAIWQVISVMSAKDLVPKTKEASLILYDTKGDKMGGNGVSFDWEILENVKTPFMLAGGLNLDNIQKALKVEALGLDFNSGLEISPGIKNKDKIKRLARILREY.

An indole-3-glycerol phosphate synthase region spans residues 1–253 (MPSVLENILK…KACIKLILGE (253 aa)). Residues 254–448 (NKVCGLTRIK…KDKIKRLARI (195 aa)) are N-(5'-phosphoribosyl)anthranilate isomerase.

It in the N-terminal section; belongs to the TrpC family. In the C-terminal section; belongs to the TrpF family.

It carries out the reaction N-(5-phospho-beta-D-ribosyl)anthranilate = 1-(2-carboxyphenylamino)-1-deoxy-D-ribulose 5-phosphate. The catalysed reaction is 1-(2-carboxyphenylamino)-1-deoxy-D-ribulose 5-phosphate + H(+) = (1S,2R)-1-C-(indol-3-yl)glycerol 3-phosphate + CO2 + H2O. Its pathway is amino-acid biosynthesis; L-tryptophan biosynthesis; L-tryptophan from chorismate: step 3/5. It functions in the pathway amino-acid biosynthesis; L-tryptophan biosynthesis; L-tryptophan from chorismate: step 4/5. In terms of biological role, bifunctional enzyme that catalyzes two sequential steps of tryptophan biosynthetic pathway. The first reaction is catalyzed by the isomerase, coded by the TrpF domain; the second reaction is catalyzed by the synthase, coded by the TrpC domain. This chain is Tryptophan biosynthesis protein TrpCF (trpC), found in Helicobacter pylori (strain ATCC 700392 / 26695) (Campylobacter pylori).